The primary structure comprises 195 residues: Pyridoxal 5'-phosphate synthase subunit PdxT (195 aa).

46-48 contacts L-glutamine; that stretch reads GES. Cys78 acts as the Nucleophile in catalysis. L-glutamine-binding positions include Arg105 and 133 to 134; that span reads IR. Residues His169 and Glu171 each act as charge relay system in the active site.

It belongs to the glutaminase PdxT/SNO family. In the presence of PdxS, forms a dodecamer of heterodimers. Only shows activity in the heterodimer.

The enzyme catalyses aldehydo-D-ribose 5-phosphate + D-glyceraldehyde 3-phosphate + L-glutamine = pyridoxal 5'-phosphate + L-glutamate + phosphate + 3 H2O + H(+). It carries out the reaction L-glutamine + H2O = L-glutamate + NH4(+). It participates in cofactor biosynthesis; pyridoxal 5'-phosphate biosynthesis. In terms of biological role, catalyzes the hydrolysis of glutamine to glutamate and ammonia as part of the biosynthesis of pyridoxal 5'-phosphate. The resulting ammonia molecule is channeled to the active site of PdxS. The protein is Pyridoxal 5'-phosphate synthase subunit PdxT of Geobacillus thermodenitrificans (strain NG80-2).